Here is a 334-residue protein sequence, read N- to C-terminus: Leukocyte cell-derived chemotaxin 1 (334 aa).

The chain crosses the membrane as a helical span at residues 45 to 65; the sequence is VVLISGAVLLLFGAIGAFYFW. In terms of domain architecture, BRICHOS spans 104–201; the sequence is GSGAEEAIAV…LCGDLPIFWL (98 aa). Cys-131 and Cys-193 are disulfide-bonded. A propeptide spanning residues 211-214 is cleaved from the precursor; sequence RERR. The segment at 218–268 is disordered; that stretch reads RKIVPTTTKRPHSGPRSNPGAGRLNNETRPSVQEDSQAFNPDNPYHQQEGE. A compositionally biased stretch (polar residues) spans 242 to 257; sequence NNETRPSVQEDSQAFN. An N-linked (GlcNAc...) asparagine glycan is attached at Asn-243. 4 disulfides stabilise this stretch: Cys-282-Cys-286, Cys-283-Cys-323, Cys-293-Cys-317, and Cys-297-Cys-313.

The protein belongs to the chondromodulin-1 family. Post-translationally, after cleavage, the post-translationally modified ChM-I is secreted as a glycoprotein. In terms of tissue distribution, detected in cartilage and cardiac valves (at protein level). Detected in the laminae fibrosa, spongiosa and ventricularis layers of normal cardiac valves (at protein level). Expression is decreased cardiac valves of patients with valvular heart disease (at protein level). Weakly expressed in chondrosarcoma.

The protein localises to the secreted. It localises to the extracellular space. Its subcellular location is the extracellular matrix. It is found in the endomembrane system. Functionally, bifunctional growth regulator that stimulates the growth of cultured chondrocytes in the presence of basic fibroblast growth factor (FGF) but inhibits the growth of cultured vascular endothelial cells. May contribute to the rapid growth of cartilage and vascular invasion prior to the replacement of cartilage by bone during endochondral bone development. Inhibits in vitro tube formation and mobilization of endothelial cells. Plays a role as antiangiogenic factor in cardiac valves to suppress neovascularization. This chain is Leukocyte cell-derived chemotaxin 1, found in Homo sapiens (Human).